The following is a 249-amino-acid chain: 3-deoxy-manno-octulosonate cytidylyltransferase (249 aa).

It belongs to the KdsB family.

It is found in the cytoplasm. The catalysed reaction is 3-deoxy-alpha-D-manno-oct-2-ulosonate + CTP = CMP-3-deoxy-beta-D-manno-octulosonate + diphosphate. The protein operates within nucleotide-sugar biosynthesis; CMP-3-deoxy-D-manno-octulosonate biosynthesis; CMP-3-deoxy-D-manno-octulosonate from 3-deoxy-D-manno-octulosonate and CTP: step 1/1. It participates in bacterial outer membrane biogenesis; lipopolysaccharide biosynthesis. Its function is as follows. Activates KDO (a required 8-carbon sugar) for incorporation into bacterial lipopolysaccharide in Gram-negative bacteria. The sequence is that of 3-deoxy-manno-octulosonate cytidylyltransferase from Aliivibrio salmonicida (strain LFI1238) (Vibrio salmonicida (strain LFI1238)).